The following is a 52-amino-acid chain: Conotoxin Cal6.36 (52 aa).

The signal sequence occupies residues 1–22; that stretch reads MKVTCVLTLAVLILTVGQMVTA. 3 disulfide bridges follow: C24/C39, C31/C43, and C38/C47.

Expressed by the venom duct.

Its subcellular location is the secreted. Probable neurotoxin. The protein is Conotoxin Cal6.36 of Californiconus californicus (California cone).